Here is an 820-residue protein sequence, read N- to C-terminus: Phenylalanine--tRNA ligase beta subunit (820 aa).

In terms of domain architecture, tRNA-binding spans 42–154; that stretch reads KGGLEGLVIG…AEAVPGTLAK (113 aa). A B5 domain is found at 413–489; sequence PQDFMVELSY…RIYGYNNVEI (77 aa). 4 residues coordinate Mg(2+): D467, D473, E476, and D477. Positions 727–820 constitute an FDX-ACB domain; the sequence is SKFPAVKRDL…LEDKLNAKLR (94 aa).

It belongs to the phenylalanyl-tRNA synthetase beta subunit family. Type 1 subfamily. As to quaternary structure, tetramer of two alpha and two beta subunits. Mg(2+) is required as a cofactor.

Its subcellular location is the cytoplasm. It catalyses the reaction tRNA(Phe) + L-phenylalanine + ATP = L-phenylalanyl-tRNA(Phe) + AMP + diphosphate + H(+). In Bacteroides thetaiotaomicron (strain ATCC 29148 / DSM 2079 / JCM 5827 / CCUG 10774 / NCTC 10582 / VPI-5482 / E50), this protein is Phenylalanine--tRNA ligase beta subunit.